A 587-amino-acid chain; its full sequence is Aspartate--tRNA(Asp/Asn) ligase (587 aa).

E173 is a binding site for L-aspartate. The aspartate stretch occupies residues 197-200 (QLFK). An L-aspartate-binding site is contributed by R219. ATP contacts are provided by residues 219-221 (RDE) and Q228. An L-aspartate-binding site is contributed by H448. E481 serves as a coordination point for ATP. Position 488 (R488) interacts with L-aspartate. 533-536 (GLDR) contributes to the ATP binding site.

Belongs to the class-II aminoacyl-tRNA synthetase family. Type 1 subfamily. Homodimer.

The protein resides in the cytoplasm. The catalysed reaction is tRNA(Asx) + L-aspartate + ATP = L-aspartyl-tRNA(Asx) + AMP + diphosphate. Aspartyl-tRNA synthetase with relaxed tRNA specificity since it is able to aspartylate not only its cognate tRNA(Asp) but also tRNA(Asn). Reaction proceeds in two steps: L-aspartate is first activated by ATP to form Asp-AMP and then transferred to the acceptor end of tRNA(Asp/Asn). The chain is Aspartate--tRNA(Asp/Asn) ligase from Alcanivorax borkumensis (strain ATCC 700651 / DSM 11573 / NCIMB 13689 / SK2).